A 1114-amino-acid chain; its full sequence is Transcriptional repressor NF-X1 (1114 aa).

Residues 9-26 (GTFKFNTDAAEFIPQERK) form an interaction with PABPC1 and PABC4 region. Disordered stretches follow at residues 20 to 220 (FIPQ…CRKP), 232 to 287 (QRRY…PTKS), and 299 to 325 (KSSR…FPRG). Phosphoserine is present on residues Ser-50, Ser-81, Ser-92, Ser-126, Ser-130, and Ser-147. 2 stretches are compositionally biased toward polar residues: residues 72–103 (SYAS…NQPW) and 121–142 (LSEQ…SGTN). 4 stretches are compositionally biased toward basic and acidic residues: residues 143-156 (PREH…KEVV), 185-202 (LRSE…DENT), 232-248 (QRRY…EGAR), and 304-315 (VNQEKTAVRRQD). Position 320 is a phosphoserine (Ser-320). Residues 352-403 (CMVCCELVQVTAPVWSCQSCFHVFHLNCIKKWARSPASHADGQSGWRCPACQ) form an RING-type; atypical zinc finger. 8 NF-X1-type zinc fingers span residues 447–465 (CPHS…PCPA), 500–519 (CGQH…PCRI), 561–580 (CGSH…PCPR), 626–649 (CGSS…PCSR), 688–707 (CGRH…KCPL), 715–734 (CGLH…TCWQ), 826–848 (CGMH…ACKQ), and 857–878 (CGHP…ACKA). The R3H domain maps to 988–1056 (LKFVSDVEKE…KRNVVVTAVR (69 aa)). Residues 1071-1095 (ERETQTRPPPPIPHHRHQADKAPGS) form a disordered region.

The protein belongs to the NFX1 family. In terms of assembly, interacts with PABPC1 and PABPC4. In terms of tissue distribution, ubiquitously expressed, with highest levels in thymus.

Its subcellular location is the nucleus. In terms of biological role, binds to the X-box motif of MHC class II genes and represses their expression. May play an important role in regulating the duration of an inflammatory response by limiting the period in which MHC class II molecules are induced by interferon-gamma. Together with PABPC1 or PABPC4, acts as a coactivator for TERT expression. Mediates E2-dependent ubiquitination. This chain is Transcriptional repressor NF-X1 (Nfx1), found in Mus musculus (Mouse).